Reading from the N-terminus, the 701-residue chain is Polyribonucleotide nucleotidyltransferase (701 aa).

Residues D487 and D493 each coordinate Mg(2+). In terms of domain architecture, KH spans 554–613 (PTMLQMKIDSDKIRDVIGKGGATIRAICEETKASIDIEDDGSVKIYGETKEAAEAAKQRV). An S1 motif domain is found at 623 to 691 (GKIYVGKVER…NRGRIKLSIK (69 aa)).

It belongs to the polyribonucleotide nucleotidyltransferase family. Component of the RNA degradosome, which is a multiprotein complex involved in RNA processing and mRNA degradation. Requires Mg(2+) as cofactor.

It is found in the cytoplasm. The catalysed reaction is RNA(n+1) + phosphate = RNA(n) + a ribonucleoside 5'-diphosphate. Its function is as follows. Involved in mRNA degradation. Catalyzes the phosphorolysis of single-stranded polyribonucleotides processively in the 3'- to 5'-direction. This is Polyribonucleotide nucleotidyltransferase from Pseudomonas paraeruginosa (strain DSM 24068 / PA7) (Pseudomonas aeruginosa (strain PA7)).